Reading from the N-terminus, the 88-residue chain is Molybdopterin synthase sulfur carrier subunit (88 aa).

Gly-88 is subject to 1-thioglycine; alternate. Residue Gly-88 is modified to Glycyl adenylate; alternate.

Belongs to the MoaD family. MOCS2A subfamily. As to quaternary structure, heterotetramer; composed of 2 small (MOCS2A) and 2 large (MOCS2B) subunits. In terms of processing, C-terminal thiocarboxylation occurs in 2 steps, it is first acyl-adenylated (-COAMP) via the hesA/moeB/thiF part of uba4, then thiocarboxylated (-COSH) via the rhodanese domain of uba4.

The protein localises to the cytoplasm. It participates in cofactor biosynthesis; molybdopterin biosynthesis. Its function is as follows. Acts as a sulfur carrier required for molybdopterin biosynthesis. Component of the molybdopterin synthase complex that catalyzes the conversion of precursor Z into molybdopterin by mediating the incorporation of 2 sulfur atoms into precursor Z to generate a dithiolene group. In the complex, serves as sulfur donor by being thiocarboxylated (-COSH) at its C-terminus by uba4. After interaction with MOCS2B, the sulfur is then transferred to precursor Z to form molybdopterin. In Aspergillus niger (strain ATCC MYA-4892 / CBS 513.88 / FGSC A1513), this protein is Molybdopterin synthase sulfur carrier subunit.